A 135-amino-acid chain; its full sequence is Crustacean hyperglycemic hormones A* (135 aa).

Residues 1–26 form the signal peptide; sequence MVSFRTMWSVVVVVVVASLASSGVQG. Pyrrolidone carboxylic acid is present on Gln62. Intrachain disulfides connect Cys68-Cys104, Cys84-Cys100, and Cys87-Cys113. Position 133 is a valine amide (Val133).

The protein belongs to the arthropod CHH/MIH/GIH/VIH hormone family. In terms of tissue distribution, produced by the medulla terminalis X-organ in the eyestalks and transported to the sinus gland where they are stored and released.

Its subcellular location is the secreted. Hormone found in the sinus gland of isopods and decapods which controls the blood sugar level. Has a secretagogue action over the amylase released from the midgut gland. May act as a stress hormone and may be involved in the control of molting and reproduction. The chain is Crustacean hyperglycemic hormones A* (CHHA*) from Faxonius limosus (Spinycheek crayfish).